The chain runs to 490 residues: Probable G-protein coupled receptor npr-8 (490 aa).

The Extracellular portion of the chain corresponds to 1–55; sequence MEVKDIDNYCDRGISPNASNYLTYPFDGLCLQKFFYQLQTSLRRFTPYEEIIYTT. A glycan (N-linked (GlcNAc...) asparagine) is linked at asparagine 17. Residues 56 to 76 form a helical membrane-spanning segment; sequence VYIIISVAAVIGNGLVIMAVV. Over 77 to 86 the chain is Cytoplasmic; that stretch reads RKKTMRTNRN. The helical transmembrane segment at 87–107 threads the bilayer; the sequence is VLILNLALSNLILAITNIPFL. The Extracellular portion of the chain corresponds to 108-125; sequence WLPSIDFEFPYSRFFCKF. A helical membrane pass occupies residues 126 to 146; that stretch reads ANVLPGSNIYCSTLTISVMAI. The Cytoplasmic segment spans residues 147 to 166; that stretch reads DRYYSVKKLKIASNRKQCFH. Residues 167 to 187 traverse the membrane as a helical segment; it reads AVLVSLAIWIVSFILSLPLLL. At 188-236 the chain is on the extracellular side; the sequence is YYETSMLYVMREIRVVDQSGQEVIRSYGWRQCRLVSAGRLPDITQSIQL. Residues 237–257 form a helical membrane-spanning segment; it reads LMSILQVAFLYIVPLFVLSIF. Residues 258–331 are Cytoplasmic-facing; the sequence is NVKLTRFLKT…QRTNRTTSLL (74 aa). Positions 272 to 322 are disordered; the sequence is MSKTRAPPKRFDRSDSHHNSLKNNNNHTSSLRSPSMPSIRSSITERNKTNQ. Over residues 280–289 the composition is skewed to basic and acidic residues; the sequence is KRFDRSDSHH. Low complexity predominate over residues 292 to 313; that stretch reads LKNNNNHTSSLRSPSMPSIRSS. A helical membrane pass occupies residues 332-352; that stretch reads IAMAGSYAALWFPFTLITFLI. Topologically, residues 353-374 are extracellular; it reads DFELIINQDYVNLVERIDQTCK. Residues 375–395 traverse the membrane as a helical segment; the sequence is MVSMLSICVNPFLYGFLNTNF. The Cytoplasmic portion of the chain corresponds to 396-490; that stretch reads RHEFSDIYYR…DDDIEKDSFV (95 aa).

It belongs to the G-protein coupled receptor 1 family.

Its subcellular location is the cell membrane. Not known. Putative receptor. The polypeptide is Probable G-protein coupled receptor npr-8 (Caenorhabditis elegans).